Reading from the N-terminus, the 85-residue chain is Sec-independent protein translocase protein TatA (85 aa).

Residues 1–21 (MGSFSIWHWLIVLLIIMMVFG) form a helical membrane-spanning segment. The span at 39–51 (FKEGMREGSEDKP) shows a compositional bias: basic and acidic residues. The interval 39–85 (FKEGMREGSEDKPAGSQQGQQAAGQPPRELHDSTTIDVEARDKSKQG) is disordered. Positions 52–65 (AGSQQGQQAAGQPP) are enriched in low complexity. The segment covering 66–85 (RELHDSTTIDVEARDKSKQG) has biased composition (basic and acidic residues).

It belongs to the TatA/E family. The Tat system comprises two distinct complexes: a TatABC complex, containing multiple copies of TatA, TatB and TatC subunits, and a separate TatA complex, containing only TatA subunits. Substrates initially bind to the TatABC complex, which probably triggers association of the separate TatA complex to form the active translocon.

It is found in the cell inner membrane. In terms of biological role, part of the twin-arginine translocation (Tat) system that transports large folded proteins containing a characteristic twin-arginine motif in their signal peptide across membranes. TatA could form the protein-conducting channel of the Tat system. This chain is Sec-independent protein translocase protein TatA, found in Ralstonia nicotianae (strain ATCC BAA-1114 / GMI1000) (Ralstonia solanacearum).